The primary structure comprises 240 residues: Uridylate kinase (240 aa).

K9 to G12 is a binding site for ATP. G51 provides a ligand contact to UMP. Residues G52 and R56 each coordinate ATP. Residues D71 and T132 to T139 contribute to the UMP site. ATP contacts are provided by T159, Y165, and D168.

Belongs to the UMP kinase family. In terms of assembly, homohexamer.

It is found in the cytoplasm. The catalysed reaction is UMP + ATP = UDP + ADP. It functions in the pathway pyrimidine metabolism; CTP biosynthesis via de novo pathway; UDP from UMP (UMPK route): step 1/1. Its activity is regulated as follows. Inhibited by UTP. Catalyzes the reversible phosphorylation of UMP to UDP. This chain is Uridylate kinase, found in Synechococcus elongatus (strain ATCC 33912 / PCC 7942 / FACHB-805) (Anacystis nidulans R2).